Here is a 662-residue protein sequence, read N- to C-terminus: Chaperone protein dnaK1 (662 aa).

Threonine 198 is modified (phosphothreonine; by autocatalysis). Residues 630 to 662 (DWDDDPWAAPSGPPRGRSLNRRDRDPWDDDFYR) are disordered. The segment covering 649-662 (NRRDRDPWDDDFYR) has biased composition (basic and acidic residues).

This sequence belongs to the heat shock protein 70 family.

Its function is as follows. Acts as a chaperone. The sequence is that of Chaperone protein dnaK1 (dnaK1) from Parasynechococcus marenigrum (strain WH8102).